Reading from the N-terminus, the 211-residue chain is tRNA (pseudouridine(54)-N(1))-methyltransferase (211 aa).

Residues Leu-128, Gly-150, and Cys-183 each contribute to the S-adenosyl-L-methionine site.

Belongs to the methyltransferase superfamily. TrmY family. As to quaternary structure, homodimer.

Its subcellular location is the cytoplasm. It catalyses the reaction pseudouridine(54) in tRNA + S-adenosyl-L-methionine = N(1)-methylpseudouridine(54) in tRNA + S-adenosyl-L-homocysteine + H(+). Functionally, specifically catalyzes the N1-methylation of pseudouridine at position 54 (Psi54) in tRNAs. This is tRNA (pseudouridine(54)-N(1))-methyltransferase from Methanosarcina acetivorans (strain ATCC 35395 / DSM 2834 / JCM 12185 / C2A).